A 222-amino-acid chain; its full sequence is ATP-dependent Clp protease proteolytic subunit (222 aa).

The Nucleophile role is filled by S125. The active site involves H150.

Belongs to the peptidase S14 family. As to quaternary structure, fourteen ClpP subunits assemble into 2 heptameric rings which stack back to back to give a disk-like structure with a central cavity, resembling the structure of eukaryotic proteasomes.

Its subcellular location is the cytoplasm. The catalysed reaction is Hydrolysis of proteins to small peptides in the presence of ATP and magnesium. alpha-casein is the usual test substrate. In the absence of ATP, only oligopeptides shorter than five residues are hydrolyzed (such as succinyl-Leu-Tyr-|-NHMec, and Leu-Tyr-Leu-|-Tyr-Trp, in which cleavage of the -Tyr-|-Leu- and -Tyr-|-Trp bonds also occurs).. Its function is as follows. Cleaves peptides in various proteins in a process that requires ATP hydrolysis. Has a chymotrypsin-like activity. Plays a major role in the degradation of misfolded proteins. The polypeptide is ATP-dependent Clp protease proteolytic subunit (Porphyromonas gingivalis (strain ATCC BAA-308 / W83)).